A 163-amino-acid polypeptide reads, in one-letter code: NADH-quinone oxidoreductase subunit I (163 aa).

2 consecutive 4Fe-4S ferredoxin-type domains span residues L54–A84 and T94–I123. 8 residues coordinate [4Fe-4S] cluster: C64, C67, C70, C74, C103, C106, C109, and C113.

It belongs to the complex I 23 kDa subunit family. In terms of assembly, NDH-1 is composed of 14 different subunits. Subunits NuoA, H, J, K, L, M, N constitute the membrane sector of the complex. The cofactor is [4Fe-4S] cluster.

It localises to the cell inner membrane. The enzyme catalyses a quinone + NADH + 5 H(+)(in) = a quinol + NAD(+) + 4 H(+)(out). Its function is as follows. NDH-1 shuttles electrons from NADH, via FMN and iron-sulfur (Fe-S) centers, to quinones in the respiratory chain. The immediate electron acceptor for the enzyme in this species is believed to be ubiquinone. Couples the redox reaction to proton translocation (for every two electrons transferred, four hydrogen ions are translocated across the cytoplasmic membrane), and thus conserves the redox energy in a proton gradient. This is NADH-quinone oxidoreductase subunit I from Xanthomonas campestris pv. campestris (strain 8004).